Reading from the N-terminus, the 560-residue chain is Dihydroxy-acid dehydratase (560 aa).

Cysteine 52 contacts [2Fe-2S] cluster. Residue aspartate 84 participates in Mg(2+) binding. Residue cysteine 125 coordinates [2Fe-2S] cluster. Residues aspartate 126 and lysine 127 each coordinate Mg(2+). An N6-carboxylysine modification is found at lysine 127. Residue cysteine 197 participates in [2Fe-2S] cluster binding. Glutamate 449 is a binding site for Mg(2+). Serine 475 (proton acceptor) is an active-site residue.

It belongs to the IlvD/Edd family. As to quaternary structure, homodimer. It depends on [2Fe-2S] cluster as a cofactor. Mg(2+) serves as cofactor.

It carries out the reaction (2R)-2,3-dihydroxy-3-methylbutanoate = 3-methyl-2-oxobutanoate + H2O. It catalyses the reaction (2R,3R)-2,3-dihydroxy-3-methylpentanoate = (S)-3-methyl-2-oxopentanoate + H2O. Its pathway is amino-acid biosynthesis; L-isoleucine biosynthesis; L-isoleucine from 2-oxobutanoate: step 3/4. It functions in the pathway amino-acid biosynthesis; L-valine biosynthesis; L-valine from pyruvate: step 3/4. Functionally, functions in the biosynthesis of branched-chain amino acids. Catalyzes the dehydration of (2R,3R)-2,3-dihydroxy-3-methylpentanoate (2,3-dihydroxy-3-methylvalerate) into 2-oxo-3-methylpentanoate (2-oxo-3-methylvalerate) and of (2R)-2,3-dihydroxy-3-methylbutanoate (2,3-dihydroxyisovalerate) into 2-oxo-3-methylbutanoate (2-oxoisovalerate), the penultimate precursor to L-isoleucine and L-valine, respectively. This Sulfurisphaera tokodaii (strain DSM 16993 / JCM 10545 / NBRC 100140 / 7) (Sulfolobus tokodaii) protein is Dihydroxy-acid dehydratase.